We begin with the raw amino-acid sequence, 105 residues long: MPADHFLKRQAMSDFIICYDITDPRRLGRLYRYLIKRAVPLQYSVFLFRGDDRQLERCIQDAIELIDEKQDDLRVYPLPGRGLKARIGRPTLPEGIQWSGLPAKW.

Position 20 (Asp-20) interacts with Mg(2+).

This sequence belongs to the CRISPR-associated endoribonuclease Cas2 protein family. As to quaternary structure, homodimer, forms a heterotetramer with a Cas1 homodimer. The cofactor is Mg(2+).

Its function is as follows. CRISPR (clustered regularly interspaced short palindromic repeat), is an adaptive immune system that provides protection against mobile genetic elements (viruses, transposable elements and conjugative plasmids). CRISPR clusters contain sequences complementary to antecedent mobile elements and target invading nucleic acids. CRISPR clusters are transcribed and processed into CRISPR RNA (crRNA). Functions as a ssRNA-specific endoribonuclease. Involved in the integration of spacer DNA into the CRISPR cassette. This chain is CRISPR-associated endoribonuclease Cas2 1 (cas21), found in Nitrosomonas europaea (strain ATCC 19718 / CIP 103999 / KCTC 2705 / NBRC 14298).